Consider the following 138-residue polypeptide: Ribonuclease kappa-A (138 aa).

An N-terminal signal peptide occupies residues 1–24; sequence MVLYFSPVLTFFLANFFNSKSTTT. Residues 25–75 are Extracellular-facing; sequence ENLQVFLVENQHRDSKRKINPTFSKKGIEVRQQNENLWSKIVALRFDYSVW. A helical membrane pass occupies residues 76 to 96; the sequence is GIIQLVLMMGLFFYINSVALI. The Cytoplasmic portion of the chain corresponds to 97 to 138; the sequence is EDLPIDEEFNSVEEFYTAATSAYNQNAYTVGLPVHLCAYASI.

This sequence belongs to the RNase K family.

It localises to the membrane. Functionally, endoribonuclease. The sequence is that of Ribonuclease kappa-A from Ceratitis capitata (Mediterranean fruit fly).